The sequence spans 411 residues: Protein Brevis radix-like 2 (411 aa).

2 disordered regions span residues 10–31 and 103–149; these read KDGG…KSLT and AAPS…DDDE. A compositionally biased stretch (polar residues) spans 20-31; that stretch reads ATATPNSGKSLT. Over residues 136 to 149 the composition is skewed to acidic residues; that stretch reads GEEDYDDDDDDDDE. The BRX 1 domain maps to 161-217; the sequence is REWTAQVEPGVQITFVSIPGGAGNDLKRIRFSREMFNKWEAQRWWGENYDRVVELYN. 2 disordered regions span residues 245–294 and 324–346; these read SRVG…VAAA and AGPA…ASVS. The span at 276 to 294 shows a compositional bias: low complexity; sequence SRTASSKAQLSSSSSVAAA. The BRX 2 domain occupies 356–411; it reads TEWVEQDEPGVSITIREFGDGTRELRRVRFSRERFGEERAKVWWEQNRDRIHAQYL.

The protein belongs to the BRX family.

Its subcellular location is the nucleus. This Oryza sativa subsp. japonica (Rice) protein is Protein Brevis radix-like 2 (BRXL2).